The sequence spans 172 residues: Translation initiation factor IF-3 (172 aa).

Belongs to the IF-3 family. Monomer.

It is found in the cytoplasm. In terms of biological role, IF-3 binds to the 30S ribosomal subunit and shifts the equilibrium between 70S ribosomes and their 50S and 30S subunits in favor of the free subunits, thus enhancing the availability of 30S subunits on which protein synthesis initiation begins. The sequence is that of Translation initiation factor IF-3 from Geobacter sulfurreducens (strain ATCC 51573 / DSM 12127 / PCA).